We begin with the raw amino-acid sequence, 494 residues long: 4-trimethylaminobutyraldehyde dehydrogenase (494 aa).

S2 is modified (N-acetylserine). An N6-acetyllysine; alternate modification is found at K30. The residue at position 30 (K30) is an N6-succinyllysine; alternate. An N6-succinyllysine modification is found at K59. NAD(+) contacts are provided by residues K180 and G232 to T236. Residue E254 is the Proton acceptor of the active site. The active-site Nucleophile is the C288. The residue at position 298 (K298) is an N6-acetyllysine. K303 is subject to N6-acetyllysine; alternate. K303 carries the post-translational modification N6-succinyllysine; alternate. N6-acetyllysine is present on K344. Residue E391 participates in NAD(+) binding.

Belongs to the aldehyde dehydrogenase family. In terms of assembly, homotetramer.

It is found in the cytoplasm. Its subcellular location is the cytosol. The catalysed reaction is 4-(trimethylamino)butanal + NAD(+) + H2O = 4-(trimethylamino)butanoate + NADH + 2 H(+). It carries out the reaction an aldehyde + NAD(+) + H2O = a carboxylate + NADH + 2 H(+). It catalyses the reaction 4-aminobutanal + NAD(+) + H2O = 4-aminobutanoate + NADH + 2 H(+). The enzyme catalyses formaldehyde + NAD(+) + H2O = formate + NADH + 2 H(+). The catalysed reaction is acetaldehyde + NAD(+) + H2O = acetate + NADH + 2 H(+). It carries out the reaction imidazole-4-acetaldehyde + NAD(+) + H2O = imidazole-4-acetate + NADH + 2 H(+). It catalyses the reaction acrolein + NAD(+) + H2O = acrylate + NADH + 2 H(+). The enzyme catalyses (5-hydroxyindol-3-yl)acetaldehyde + NAD(+) + H2O = (5-hydroxyindol-3-yl)acetate + NADH + 2 H(+). The catalysed reaction is 3,4-dihydroxyphenylacetaldehyde + NAD(+) + H2O = 3,4-dihydroxyphenylacetate + NADH + 2 H(+). It carries out the reaction spermine monoaldehyde + NAD(+) + H2O = N-(2-carboxyethyl)spermidine + NADH + 2 H(+). It catalyses the reaction propanal + NAD(+) + H2O = propanoate + NADH + 2 H(+). The enzyme catalyses butanal + NAD(+) + H2O = butanoate + NADH + 2 H(+). The catalysed reaction is pentanal + NAD(+) + H2O = pentanoate + NADH + 2 H(+). It carries out the reaction hexanal + NAD(+) + H2O = hexanoate + NADH + 2 H(+). The protein operates within amine and polyamine biosynthesis; carnitine biosynthesis. Converts gamma-trimethylaminobutyraldehyde into gamma-butyrobetaine with high efficiency (in vitro). Can catalyze the irreversible oxidation of a broad range of aldehydes to the corresponding acids in an NAD-dependent reaction, but with low efficiency. Catalyzes the oxidation of aldehydes arising from biogenic amines and polyamines. This is 4-trimethylaminobutyraldehyde dehydrogenase (ALDH9A1) from Pongo abelii (Sumatran orangutan).